The primary structure comprises 149 residues: Vesicle-associated protein 3-1 (149 aa).

Position 1 is an N-acetylmethionine (Met-1). At Ser-2 the chain carries N-acetylserine; in Vesicle-associated protein 3-1, N-terminally processed. Residues 6–126 enclose the MSP domain; the sequence is LLEIEPMYLQ…EETKLRVTYV (121 aa).

Belongs to the VAMP-associated protein (VAP) (TC 9.B.17) family.

Functionally, may play a role in vesicle trafficking. The polypeptide is Vesicle-associated protein 3-1 (PVA31) (Arabidopsis thaliana (Mouse-ear cress)).